The primary structure comprises 711 residues: Ribosomal RNA large subunit methyltransferase K/L (711 aa).

Residues 42–153 form the THUMP domain; the sequence is DAQRAVLWSR…KGRATISVDL (112 aa).

Belongs to the methyltransferase superfamily. RlmKL family.

It localises to the cytoplasm. The enzyme catalyses guanosine(2445) in 23S rRNA + S-adenosyl-L-methionine = N(2)-methylguanosine(2445) in 23S rRNA + S-adenosyl-L-homocysteine + H(+). It catalyses the reaction guanosine(2069) in 23S rRNA + S-adenosyl-L-methionine = N(2)-methylguanosine(2069) in 23S rRNA + S-adenosyl-L-homocysteine + H(+). In terms of biological role, specifically methylates the guanine in position 2445 (m2G2445) and the guanine in position 2069 (m7G2069) of 23S rRNA. The sequence is that of Ribosomal RNA large subunit methyltransferase K/L from Xanthomonas oryzae pv. oryzae (strain KACC10331 / KXO85).